Reading from the N-terminus, the 267-residue chain is Ribosomal RNA small subunit methyltransferase A (267 aa).

S-adenosyl-L-methionine-binding residues include Asn18, Leu20, Gly45, Glu66, Asp91, and Asn112.

This sequence belongs to the class I-like SAM-binding methyltransferase superfamily. rRNA adenine N(6)-methyltransferase family. RsmA subfamily.

It is found in the cytoplasm. It catalyses the reaction adenosine(1518)/adenosine(1519) in 16S rRNA + 4 S-adenosyl-L-methionine = N(6)-dimethyladenosine(1518)/N(6)-dimethyladenosine(1519) in 16S rRNA + 4 S-adenosyl-L-homocysteine + 4 H(+). In terms of biological role, specifically dimethylates two adjacent adenosines (A1518 and A1519) in the loop of a conserved hairpin near the 3'-end of 16S rRNA in the 30S particle. May play a critical role in biogenesis of 30S subunits. In Shewanella denitrificans (strain OS217 / ATCC BAA-1090 / DSM 15013), this protein is Ribosomal RNA small subunit methyltransferase A.